The sequence spans 250 residues: 7-cyano-7-deazaguanine synthase (250 aa).

21 to 31 serves as a coordination point for ATP; the sequence is FSGGQDSSVCL. Cys209, Cys224, Cys227, and Cys230 together coordinate Zn(2+).

It belongs to the QueC family. Requires Zn(2+) as cofactor.

It carries out the reaction 7-carboxy-7-deazaguanine + NH4(+) + ATP = 7-cyano-7-deazaguanine + ADP + phosphate + H2O + H(+). It participates in purine metabolism; 7-cyano-7-deazaguanine biosynthesis. Its function is as follows. Catalyzes the ATP-dependent conversion of 7-carboxy-7-deazaguanine (CDG) to 7-cyano-7-deazaguanine (preQ(0)). This Caulobacter sp. (strain K31) protein is 7-cyano-7-deazaguanine synthase.